We begin with the raw amino-acid sequence, 424 residues long: MFLLPRFVLVSCIIGSLGFDNPPTNVVSHLNGDWFLFGDSRSDCNHVVNTNPRNYSYMDLNPALCDSGKISSKAGNSIFRSFHFTDFYNYTGEGQQIIFYEGVNFTPYHAFKCTTSGSNDIWMQNKGLFYTQVYKNMAVYRSLTFVNVPYVYNGSAQSTALCKSGSLVLNNPAYIAREANFGDYYYKVEADFYLSGCDEYIVPLCIFNGKFLSNTKYYDDSQYYFNKDTGVIYGLNSTETITTGFDFNCHYLVLPSGNYLAISNELLLTVPTKAICLNKRKDFTPVQVVDSRWNNARQSDNMTAVACQPPYCYFRNSTTNYVGVYDINHGDAGFTSILSGLLYDSPCFSQQGVFRYDNVSSVWPLYPYGRCPTAADINNPDVPICVYDPLPLILLGILLGVAVIIIVVLLLYFMVDNGTRLHDA.

An N-terminal signal peptide occupies residues 1–16 (MFLLPRFVLVSCIIGS). The esterase domain 1 stretch occupies residues 7 to 127 (FVLVSCIIGS…SNDIWMQNKG (121 aa)). The Virion surface segment spans residues 17–392 (LGFDNPPTNV…PICVYDPLPL (376 aa)). Serine 40 (nucleophile) is an active-site residue. Cysteine 44 and cysteine 65 form a disulfide bridge. Asparagine 54, asparagine 89, asparagine 153, asparagine 236, and asparagine 301 each carry an N-linked (GlcNAc...) asparagine; by host glycan. Intrachain disulfides connect cysteine 113–cysteine 162, cysteine 197–cysteine 276, and cysteine 205–cysteine 249. Residues 128-266 (LFYTQVYKNM…GNYLAISNEL (139 aa)) are receptor binding. The esterase domain 2 stretch occupies residues 267-379 (LLTVPTKAIC…RCPTAADINN (113 aa)). A disulfide bond links cysteine 307 and cysteine 312. Asparagine 316 is a glycosylation site (N-linked (GlcNAc...) asparagine; by host). Active-site charge relay system residues include aspartate 326 and histidine 329. A disulfide bridge connects residues cysteine 347 and cysteine 371. Residue asparagine 358 is glycosylated (N-linked (GlcNAc...) asparagine; by host). Residues 393–413 (ILLGILLGVAVIIIVVLLLYF) traverse the membrane as a helical segment. Topologically, residues 414-424 (MVDNGTRLHDA) are intravirion. N-linked (GlcNAc...) asparagine; by host glycosylation occurs at asparagine 417.

This sequence belongs to the influenza type C/coronaviruses hemagglutinin-esterase family. In terms of assembly, homodimer; disulfide-linked. Forms a complex with the M protein in the pre-Golgi. Associates then with S-M complex to form a ternary complex S-M-HE. In terms of processing, N-glycosylated in the host RER.

It localises to the virion membrane. The protein resides in the host cell membrane. It carries out the reaction N-acetyl-9-O-acetylneuraminate + H2O = N-acetylneuraminate + acetate + H(+). The enzyme catalyses N-acetyl-4-O-acetylneuraminate + H2O = N-acetylneuraminate + acetate + H(+). Its function is as follows. Structural protein that makes short spikes at the surface of the virus. Contains receptor binding and receptor-destroying activities. Mediates de-O-acetylation of N-acetyl-4-O-acetylneuraminic acid, which is probably the receptor determinant recognized by the virus on the surface of erythrocytes and susceptible cells. This receptor-destroying activity is important for virus release as it probably helps preventing self-aggregation and ensures the efficient spread of the progeny virus from cell to cell. May serve as a secondary viral attachment protein for initiating infection, the spike protein being the major one. May become a target for both the humoral and the cellular branches of the immune system. This Bovine coronavirus (strain LY-138) (BCoV) protein is Hemagglutinin-esterase.